The primary structure comprises 194 residues: Holliday junction branch migration complex subunit RuvA (194 aa).

A domain I region spans residues M1–A64. The domain II stretch occupies residues T65–A143. The flexible linker stretch occupies residues A144 to A147. Residues A147–K194 form a domain III region.

It belongs to the RuvA family. In terms of assembly, homotetramer. Forms an RuvA(8)-RuvB(12)-Holliday junction (HJ) complex. HJ DNA is sandwiched between 2 RuvA tetramers; dsDNA enters through RuvA and exits via RuvB. An RuvB hexamer assembles on each DNA strand where it exits the tetramer. Each RuvB hexamer is contacted by two RuvA subunits (via domain III) on 2 adjacent RuvB subunits; this complex drives branch migration. In the full resolvosome a probable DNA-RuvA(4)-RuvB(12)-RuvC(2) complex forms which resolves the HJ.

It is found in the cytoplasm. The RuvA-RuvB-RuvC complex processes Holliday junction (HJ) DNA during genetic recombination and DNA repair, while the RuvA-RuvB complex plays an important role in the rescue of blocked DNA replication forks via replication fork reversal (RFR). RuvA specifically binds to HJ cruciform DNA, conferring on it an open structure. The RuvB hexamer acts as an ATP-dependent pump, pulling dsDNA into and through the RuvAB complex. HJ branch migration allows RuvC to scan DNA until it finds its consensus sequence, where it cleaves and resolves the cruciform DNA. The protein is Holliday junction branch migration complex subunit RuvA of Neisseria meningitidis serogroup B (strain ATCC BAA-335 / MC58).